The primary structure comprises 459 residues: Ribulose bisphosphate carboxylase large chain (459 aa).

A propeptide spanning residues 1–2 (MS) is cleaved from the precursor. At Pro3 the chain carries N-acetylproline. Lys14 is subject to N6,N6,N6-trimethyllysine. Positions 123 and 173 each coordinate substrate. Lys175 (proton acceptor) is an active-site residue. Position 177 (Lys177) interacts with substrate. Mg(2+)-binding residues include Lys201, Asp203, and Glu204. Lys201 is subject to N6-carboxylysine. His294 functions as the Proton acceptor in the catalytic mechanism. Arg295, His327, and Ser379 together coordinate substrate.

This sequence belongs to the RuBisCO large chain family. Type I subfamily. Heterohexadecamer of 8 large chains and 8 small chains; disulfide-linked. The disulfide link is formed within the large subunit homodimers. It depends on Mg(2+) as a cofactor. The disulfide bond which can form in the large chain dimeric partners within the hexadecamer appears to be associated with oxidative stress and protein turnover.

It is found in the plastid. The protein localises to the chloroplast. It catalyses the reaction 2 (2R)-3-phosphoglycerate + 2 H(+) = D-ribulose 1,5-bisphosphate + CO2 + H2O. The catalysed reaction is D-ribulose 1,5-bisphosphate + O2 = 2-phosphoglycolate + (2R)-3-phosphoglycerate + 2 H(+). Functionally, ruBisCO catalyzes two reactions: the carboxylation of D-ribulose 1,5-bisphosphate, the primary event in carbon dioxide fixation, as well as the oxidative fragmentation of the pentose substrate in the photorespiration process. Both reactions occur simultaneously and in competition at the same active site. The protein is Ribulose bisphosphate carboxylase large chain of Corynocarpus laevigatus (New Zealand laurel).